Consider the following 399-residue polypeptide: Serine/threonine-protein kinase PKZ1 (399 aa).

Positions 30–50 (PMQCAYQTQSHSNPEGAKRGR) are disordered. Residues 92–371 (WQLFDQIGAG…ADQMLQHPWM (280 aa)) form the Protein kinase domain. ATP is bound by residues 98–106 (IGAGAFGVV) and Lys-121. Asp-219 serves as the catalytic Proton acceptor.

This sequence belongs to the protein kinase superfamily. CAMK Ser/Thr protein kinase family.

The enzyme catalyses L-seryl-[protein] + ATP = O-phospho-L-seryl-[protein] + ADP + H(+). The catalysed reaction is L-threonyl-[protein] + ATP = O-phospho-L-threonyl-[protein] + ADP + H(+). In terms of biological role, may regulate an early stage of the zoospore pathway. This Phytophthora infestans (strain T30-4) (Potato late blight agent) protein is Serine/threonine-protein kinase PKZ1.